The sequence spans 530 residues: UDP-glucuronosyltransferase 1A7 (530 aa).

Positions 1 to 25 (MARAGWTGLLPLYVCLLLTCGFAKA) are cleaved as a signal peptide. 3 N-linked (GlcNAc...) asparagine glycosylation sites follow: Asn71, Asn292, and Asn344. A helical membrane pass occupies residues 488–504 (VIGFLLAVVLTVAFITF).

It belongs to the UDP-glycosyltransferase family. Homodimer. Homooligomer. Interacts with UGT1A1, UGT1A3, UGT1A4, UGT1A6, UGT1A8, UGT1A9 and UGT1A10 to form heterodimers. Isoform 1 interacts with isoform 2/i2 suggesting that oligomerization is involved in negative regulation of transferase activity by isoform 2. Isoform 1 also interacts with respective i2 isoforms of UGT1A1, UGT1A3, UGT1A4, UGT1A6, UGT1A8, UGT1A9 and UGT1A10. Liver and gastric tissue. Isoform 1 and isoform 2 are expressed in esophagus. Neither isoform is expressed in liver, kidney, colon and small intestine.

The protein resides in the endoplasmic reticulum membrane. The enzyme catalyses glucuronate acceptor + UDP-alpha-D-glucuronate = acceptor beta-D-glucuronoside + UDP + H(+). It catalyses the reaction 17alpha-estradiol + UDP-alpha-D-glucuronate = 17alpha-estradiol 3-O-(beta-D-glucuronate) + UDP + H(+). It carries out the reaction prunetin + UDP-alpha-D-glucuronate = prunetin-5-O-beta-D-glucuronide + UDP. The catalysed reaction is 5-epi-5-F2t-IsoP + UDP-alpha-D-glucuronate = 5-epi-5-F2t-IsoP-glucuronide + UDP + H(+). The enzyme catalyses (E)-ferulate + UDP-alpha-D-glucuronate = (E)-ferulic acid beta-D-glucuronate ester + UDP. It catalyses the reaction candesartan + UDP-alpha-D-glucuronate = candesartan O-beta-D-glucuronoside + UDP. It carries out the reaction SN-38 + UDP-alpha-D-glucuronate = SN-38 O-beta-D-glucuronide + UDP + H(+). The catalysed reaction is mycophenolate + UDP-alpha-D-glucuronate = mycophenolate 7-O-beta-D-glucuronide + UDP + H(+). In terms of biological role, UDP-glucuronosyltransferase (UGT) that catalyzes phase II biotransformation reactions in which lipophilic substrates are conjugated with glucuronic acid to increase the metabolite's water solubility, thereby facilitating excretion into either the urine or bile. Essential for the elimination and detoxification of drugs, xenobiotics and endogenous compounds. Catalyzes the glucuronidation of endogenous estrogen hormone epiestradiol. Involved in the glucuronidation of F2-isoprostane (5-epi-5-F2t-IsoP). Involved in the glucuronidation of the phytochemical ferulic acid at the carboxylic acid group. Also catalyzes the glucuronidation of the isoflavones genistein, daidzein, glycitein, formononetin, biochanin A and prunetin, which are phytoestrogens with anticancer and cardiovascular properties. Involved in the glucuronidation of the AGTR1 angiotensin receptor antagonist caderastan, a drug which can inhibit the effect of angiotensin II. Involved in the biotransformation of 7-ethyl-10-hydroxycamptothecin (SN-38), the pharmacologically active metabolite of the anticancer drug irinotecan. Also metabolizes mycophenolate, an immunosuppressive agent. Functionally, lacks UGT glucuronidation activity but acts as a negative regulator of isoform 1. The sequence is that of UDP-glucuronosyltransferase 1A7 from Homo sapiens (Human).